The primary structure comprises 484 residues: Iroquois-class homeodomain protein IRX-5 (484 aa).

The homeobox; TALE-type DNA-binding region spans 112–174 (DPAYRKNATR…NARRRLKKEN (63 aa)). Disordered regions lie at residues 176 to 393 (MTWT…QCPF) and 424 to 443 (GHPG…FNGL). The segment covering 185 to 202 (EDEEEEENIDLEKNDEDE) has biased composition (acidic residues). 2 stretches are compositionally biased toward basic and acidic residues: residues 203-212 (PQKPEDKGDL) and 249-265 (SDFK…ELPR). Ser-273 carries the post-translational modification Phosphoserine. Residues 318-328 (SPPPPPPPPPA) show a composition bias toward pro residues. Residues 375-389 (SRASPAPAPARSPSA) are compositionally biased toward low complexity. Ser-465 carries the phosphoserine modification.

The protein belongs to the TALE/IRO homeobox family. In terms of tissue distribution, not expressed in the developing metanephric kidney or adult kidney.

It is found in the nucleus. In terms of biological role, establishes the cardiac repolarization gradient by its repressive actions on the KCND2 potassium-channel gene. Required for retinal cone bipolar cell differentiation. May regulate contrast adaptation in the retina and control specific aspects of visual function in circuits of the mammalian retina. Involved in craniofacial and gonadal development. Modulates the migration of progenitor cell populations in branchial arches and gonads by repressing CXCL12. The polypeptide is Iroquois-class homeodomain protein IRX-5 (Irx5) (Mus musculus (Mouse)).